Reading from the N-terminus, the 149-residue chain is UPF0756 membrane protein Nther_1957 (149 aa).

4 helical membrane passes run 5-25 (IVVL…LVAT), 52-72 (LGIL…DIMP), 85-105 (LIAV…VELL), and 111-131 (VMVG…GVPA).

Belongs to the UPF0756 family.

It is found in the cell membrane. The chain is UPF0756 membrane protein Nther_1957 from Natranaerobius thermophilus (strain ATCC BAA-1301 / DSM 18059 / JW/NM-WN-LF).